Here is a 375-residue protein sequence, read N- to C-terminus: MEELQDVQLTEIKPLLTDKDPGQHFEDFDGQEHDIETALGVVHVTMSGNTRGNRPVLLTYHDIGLNHKSCFNSFFNFDDMHEITQHFAVCHIDAPGQQQGAPSFPTGYQYPTMDELAEMLTAVLTHLNLRSIIGIGVGAGAYVLSRFALNNPLLVEGLVLLNIDPCAKGWIDWAASKLSFWTTNVVEVVLGHLFGYEELQSSLDLVQTFRLHIAQDINQDNLELFVNSYNSRKDLEIERPVFGSSTPTNTTIKCPVLLVVGDNSPAVDAVVECNSRLDPTRTTLLKMADCGGLPQVVQPGKLAEAIKYFVQGMGYMPSASMTRLVRSRTHSASSSGSMEIPRSRSHTSNAQLKSSSNNSLSNQIQETPQTIELSC.

A disordered region spans residues 326–375 (RSRTHSASSSGSMEIPRSRSHTSNAQLKSSSNNSLSNQIQETPQTIELSC). A compositionally biased stretch (low complexity) spans 348-363 (SNAQLKSSSNNSLSNQ). Polar residues predominate over residues 364-375 (IQETPQTIELSC).

The protein belongs to the NDRG family.

This is Protein NDRG3 from Xenopus laevis (African clawed frog).